Here is an 818-residue protein sequence, read N- to C-terminus: Dipeptidyl aminopeptidase B (818 aa).

The Cytoplasmic segment spans residues methionine 1–arginine 29. Residues valine 30–leucine 45 traverse the membrane as a helical; Signal-anchor for type II membrane protein segment. The Lumenal segment spans residues lysine 46–lysine 818. 7 N-linked (GlcNAc...) asparagine glycosylation sites follow: asparagine 63, asparagine 79, asparagine 110, asparagine 139, asparagine 372, asparagine 392, and asparagine 421. Serine 679 (charge relay system) is an active-site residue. Asparagine 738 is a glycosylation site (N-linked (GlcNAc...) asparagine). Residues aspartate 756 and histidine 789 each act as charge relay system in the active site.

This sequence belongs to the peptidase S9B family.

The protein resides in the vacuole membrane. This Saccharomyces cerevisiae (strain ATCC 204508 / S288c) (Baker's yeast) protein is Dipeptidyl aminopeptidase B (DAP2).